The chain runs to 81 residues: MGCNDKCGCAVPCPGGTGCRCTSARSDAAAGEHTTCGCGEHCGCNPCACGREGTPSGRANRRANCSCGAACNCASCGSTTA.

It belongs to the metallothionein superfamily. Type 15 family.

Its function is as follows. Binds 5 molecules of zinc. May have a role in Zn(2+) homeostasis during embryogenesis. The sequence is that of EC protein III from Triticum aestivum (Wheat).